The following is a 190-amino-acid chain: Female-specific histamine-binding protein 1 (190 aa).

The signal sequence occupies residues 1–18; that stretch reads MKLLLSLAFVLALSQVKA. Residues Tyr-54, Asp-57, Trp-60, Glu-100, Tyr-118, Glu-153, and Trp-155 each contribute to the histamine site. Disulfide bonds link Cys-66/Cys-187 and Cys-137/Cys-166.

It belongs to the calycin superfamily. Histamine-binding salivary protein family. Monomer. As to expression, expressed in salivary glands.

It is found in the secreted. Salivary tick protein that acts by scavenging histamine at the wound site, outcompeting histamine receptors for histamine, thereby overcoming host inflammatory responses. Binds histamine with a high-affinity (Kd=18 nM). Contains two binding histamine sites (H and L), that appear to bind histamine with differing affinities (high and low). In vivo, when tested on a mouse asthma model, shows a profound inhibitory effect on allergic asthma. Aerosol administration of this protein prevents airway hyperreactivity and abrogates peribronchial inflammation, eosinophil recruitment, mucus hypersecretion, and interleukins (IL-4 and IL-5) secretion. In addition, when tested on a mouse model of acute respiratory distress syndrome (ARDS), it attenuates endotoxin-induced acute lung injury. In Rhipicephalus appendiculatus (Brown ear tick), this protein is Female-specific histamine-binding protein 1.